The primary structure comprises 160 residues: SsrA-binding protein (160 aa).

The protein belongs to the SmpB family.

Its subcellular location is the cytoplasm. Functionally, required for rescue of stalled ribosomes mediated by trans-translation. Binds to transfer-messenger RNA (tmRNA), required for stable association of tmRNA with ribosomes. tmRNA and SmpB together mimic tRNA shape, replacing the anticodon stem-loop with SmpB. tmRNA is encoded by the ssrA gene; the 2 termini fold to resemble tRNA(Ala) and it encodes a 'tag peptide', a short internal open reading frame. During trans-translation Ala-aminoacylated tmRNA acts like a tRNA, entering the A-site of stalled ribosomes, displacing the stalled mRNA. The ribosome then switches to translate the ORF on the tmRNA; the nascent peptide is terminated with the 'tag peptide' encoded by the tmRNA and targeted for degradation. The ribosome is freed to recommence translation, which seems to be the essential function of trans-translation. This Mycobacterium bovis (strain ATCC BAA-935 / AF2122/97) protein is SsrA-binding protein.